A 195-amino-acid chain; its full sequence is Thymidine kinase (195 aa).

Residues 15–22 and 88–91 contribute to the ATP site; these read GSMFSGKS and DEVQ. Glutamate 89 functions as the Proton acceptor in the catalytic mechanism. Cysteine 145, cysteine 148, cysteine 183, and cysteine 186 together coordinate Zn(2+).

The protein belongs to the thymidine kinase family. Homotetramer.

The protein localises to the cytoplasm. It carries out the reaction thymidine + ATP = dTMP + ADP + H(+). The protein is Thymidine kinase of Bacillus cereus (strain AH187).